Consider the following 361-residue polypeptide: Homocitrate synthase (361 aa).

Residues Met1–Tyr249 form the Pyruvate carboxyltransferase domain. Arg8 is a binding site for 2-oxoglutarate. Glu9 is a binding site for Mg(2+). The 2-oxoglutarate site is built by His68, Arg128, and Thr162. Mg(2+)-binding residues include His188 and His190. His282 functions as the Proton acceptor in the catalytic mechanism.

It belongs to the alpha-IPM synthase/homocitrate synthase family. Homocitrate synthase LYS20/LYS21 subfamily. Requires Mg(2+) as cofactor. The cofactor is Mn(2+).

The enzyme catalyses acetyl-CoA + 2-oxoglutarate + H2O = (2R)-homocitrate + CoA + H(+). The protein operates within amino-acid biosynthesis; L-lysine biosynthesis via AAA pathway; L-alpha-aminoadipate from 2-oxoglutarate: step 1/5. Catalyzes the aldol-type condensation of 2-oxoglutarate with acetyl-CoA to yield homocitrate. Carries out the first step of the alpha-aminoadipate (AAA) lysine biosynthesis pathway. The sequence is that of Homocitrate synthase from Pyrococcus horikoshii (strain ATCC 700860 / DSM 12428 / JCM 9974 / NBRC 100139 / OT-3).